Consider the following 846-residue polypeptide: Interleukin cytokine receptor-related protein 1 (846 aa).

The signal sequence occupies residues M1 to T25. Over E26–T418 the chain is Extracellular. N-linked (GlcNAc...) asparagine glycans are attached at residues N29, N79, N186, N214, N339, and N395. The segment at E388 to K409 is disordered. The segment covering S400–K409 has biased composition (basic and acidic residues). A helical transmembrane segment spans residues Y419–L439. Over K440 to H846 the chain is Cytoplasmic. The SEFIR domain occupies S476–T618. The disordered stretch occupies residues G737–S771. The segment covering T744–S771 has biased composition (acidic residues).

In terms of assembly, component of a heterodimeric receptor complex composed of ilcr-1 and ilcr-2. The receptor complex interacts with actl-1 and ilc-17.1 with the interaction being mediated by ilcr-2. In terms of tissue distribution, expressed in most neurons.

The protein localises to the cell membrane. Functionally, forms a receptor complex together with receptor ilcr-2, which upon activation acts as a modulator of neuronal activity. Binding of the ligand ilc-17.1 to the ilcr-1/2 receptor complex triggers a signaling cascade that activates the downstream signaling components actl-1, pik-1 and nfki-1, and results in increased neuronal activity in RMG interneurons in response to input from oxygen-sensing neurons. This leads to increased animal movement and promotes aggregation behavior. The protein is Interleukin cytokine receptor-related protein 1 of Caenorhabditis elegans.